The chain runs to 545 residues: Hydroxylamine reductase (545 aa).

[4Fe-4S] cluster-binding residues include Cys-3, Cys-6, Cys-15, and Cys-21. The hybrid [4Fe-2O-2S] cluster site is built by His-240, Glu-264, Cys-309, Cys-401, Cys-429, Cys-454, Glu-488, and Lys-490. Residue Cys-401 is modified to Cysteine persulfide.

This sequence belongs to the HCP family. Requires [4Fe-4S] cluster as cofactor. The cofactor is hybrid [4Fe-2O-2S] cluster.

Its subcellular location is the cytoplasm. The enzyme catalyses A + NH4(+) + H2O = hydroxylamine + AH2 + H(+). Its function is as follows. Catalyzes the reduction of hydroxylamine to form NH(3) and H(2)O. This Rippkaea orientalis (strain PCC 8801 / RF-1) (Cyanothece sp. (strain PCC 8801)) protein is Hydroxylamine reductase.